The primary structure comprises 289 residues: Probable protein phosphatase 2C 39 (289 aa).

The PPM-type phosphatase domain maps to 41–288 (THGFHLVKGK…DDISVVVVKF (248 aa)). Mn(2+) contacts are provided by Asp-78, Gly-79, Asp-240, and Asp-279.

This sequence belongs to the PP2C family. The cofactor is Mg(2+). Requires Mn(2+) as cofactor.

The catalysed reaction is O-phospho-L-seryl-[protein] + H2O = L-seryl-[protein] + phosphate. It carries out the reaction O-phospho-L-threonyl-[protein] + H2O = L-threonyl-[protein] + phosphate. The polypeptide is Probable protein phosphatase 2C 39 (Arabidopsis thaliana (Mouse-ear cress)).